We begin with the raw amino-acid sequence, 163 residues long: Small ribosomal subunit protein bS18c (163 aa).

Disordered regions lie at residues 1 to 52 (MYIS…IGPG) and 144 to 163 (NLRN…SSDC). Positions 7 to 48 (PFRKSKQPFRKSKQPFHKSKQPFRKFKQPFRKSKQPFRRRSR) are enriched in basic residues.

Belongs to the bacterial ribosomal protein bS18 family. In terms of assembly, part of the 30S ribosomal subunit.

The protein localises to the plastid. It is found in the chloroplast. The protein is Small ribosomal subunit protein bS18c of Saccharum hybrid (Sugarcane).